We begin with the raw amino-acid sequence, 72 residues long: Translation initiation factor IF-1 (72 aa).

Residues Met-1 to Lys-72 enclose the S1-like domain.

It belongs to the IF-1 family. In terms of assembly, component of the 30S ribosomal translation pre-initiation complex which assembles on the 30S ribosome in the order IF-2 and IF-3, IF-1 and N-formylmethionyl-tRNA(fMet); mRNA recruitment can occur at any time during PIC assembly.

The protein resides in the cytoplasm. Functionally, one of the essential components for the initiation of protein synthesis. Stabilizes the binding of IF-2 and IF-3 on the 30S subunit to which N-formylmethionyl-tRNA(fMet) subsequently binds. Helps modulate mRNA selection, yielding the 30S pre-initiation complex (PIC). Upon addition of the 50S ribosomal subunit IF-1, IF-2 and IF-3 are released leaving the mature 70S translation initiation complex. The polypeptide is Translation initiation factor IF-1 (Syntrophotalea carbinolica (strain DSM 2380 / NBRC 103641 / GraBd1) (Pelobacter carbinolicus)).